Consider the following 196-residue polypeptide: ATP-dependent Clp protease proteolytic subunit (196 aa).

The active-site Nucleophile is the Ser-96. His-121 is a catalytic residue.

The protein belongs to the peptidase S14 family. In terms of assembly, fourteen ClpP subunits assemble into 2 heptameric rings which stack back to back to give a disk-like structure with a central cavity, resembling the structure of eukaryotic proteasomes.

It is found in the cytoplasm. It carries out the reaction Hydrolysis of proteins to small peptides in the presence of ATP and magnesium. alpha-casein is the usual test substrate. In the absence of ATP, only oligopeptides shorter than five residues are hydrolyzed (such as succinyl-Leu-Tyr-|-NHMec, and Leu-Tyr-Leu-|-Tyr-Trp, in which cleavage of the -Tyr-|-Leu- and -Tyr-|-Trp bonds also occurs).. Its function is as follows. Cleaves peptides in various proteins in a process that requires ATP hydrolysis. Has a chymotrypsin-like activity. Plays a major role in the degradation of misfolded proteins. The chain is ATP-dependent Clp protease proteolytic subunit from Streptococcus thermophilus (strain CNRZ 1066).